A 227-amino-acid polypeptide reads, in one-letter code: uncharacterized protein (227 aa).

This is an uncharacterized protein from Ictalurid herpesvirus 1 (strain Auburn) (IcHV-1).